The sequence spans 1215 residues: MPGLLNCLTGAALPLMESDVTSYVSGYALGLTASLTYGNLEAQPFQGLFVYPIDEYSTVVGFEAVIADRVVTIQLRDKAKLDRSHLDIQPATVTGNFPEEESPIAPGKVTLDEDLERVLFVVNLGTIAPMENVTVFISTSSELPTLPSGAVRVLLPAICAPTVPPSCTHRFGSSSPQPQGKDPHCFGTQTKDSYNRLCLATLLDTKVTNPMEYEFKFQLEIRGPCLLAGVESPTHEIRADAAPSAHSAKSIIITLAKKHTFDRPVEILLHPSEPHMPHVLVEKGDMTLGEYDQHLKGKADFIRGTKKDNSAERKTEVIRKRLHKDIPHHSVIMLNFCPDLQSVQPNPRKAHGEFIFLIDRSNSMSKTNIQCIKEAMLVALKSLMPACFFNIIGFGSTFKAVFASSRIYNEENLTMACDCIQRMQADMGGTNMLSPLKWVLRQPLRRGHPRLLFLITDGSVNNTGKVLELVRNHASSTRCYSFGIGPTVCYRLVKGLASVSKGSAEFLMEGERLQPKMVKSLKKAMAPVLSDVTVEWVFPETTEALISPVSTSSLFPGERLMGYGIVCDASLYISNSRSDKRRKYGMLHTQESSSSVFYPSQDEGLSPGSGNCAKNVNQGQTKDAHPCNGDSPTHHGLDVSRRRRAYSTNQISSHKTCPRATTASDPTGTARRYPLRKAKVQDLASESDWESQKWQTDLQTLLNEGHNLSQGPKLHGPGARRPSLLPQGCQLMRFFDQKPQAWGPVRELDCGASRTSAPNSQSSEDLAIEPAHCPSTFERETSLDLEPMAESEEQANPCRTATPSPVVGKALVKGLCANQRMQWEVSFELEPPALKRGDTQNADMWSETFHHLAARAIIREFEHLAEREDEIELGSNRRYQVNAVHTSKACSVISKYTAFVPVDINKRQYLPTVVKYPNSGAMLSFRNLTRQWGGSSAGLGRPQSMLREHSSAAGDSKFQTLALQDSPTSTFNKTPSPGHEKQTTAEGPPQNLSASAPSSMKATETLFGSKLNLNKSRLLTRATKGFLSKSLPKASEATPGSQSSDYIPLVSLQLASGAFLLNEAFCTTIQIPMEKLKWTSPFSCLRMSLVTRRQDLKTQSPQDCTSLSSSPPSCDGISLKSEESSDQESNAMLEHMGKLWATVVALAWLEHSSANYIIEWELVAAKASSWVEKQKVPEGRTLSTLKNTARQLFVLLRHWDEKLEFNMLCYNPNYV.

The first 18 residues, 1-18 (MPGLLNCLTGAALPLMES), serve as a signal peptide directing secretion. In terms of domain architecture, VIT spans 19–141 (DVTSYVSGYA…NVTVFISTSS (123 aa)). The N-linked (GlcNAc...) asparagine glycan is linked to Asn-132. One can recognise a VWFA domain in the interval 353 to 532 (EFIFLIDRSN…KAMAPVLSDV (180 aa)). Residues 595–674 (SVFYPSQDEG…DPTGTARRYP (80 aa)) are disordered. 2 stretches are compositionally biased toward polar residues: residues 608 to 621 (GSGN…QGQT) and 646 to 667 (YSTN…SDPT). Residue Tyr-879 is modified to Phosphotyrosine. Disordered stretches follow at residues 934 to 953 (GSSA…SSAA), 964 to 999 (QDSP…APSS), and 1100 to 1121 (SPQD…SLKS). 3 stretches are compositionally biased toward polar residues: residues 964–975 (QDSPTSTFNKTP), 990–999 (QNLSASAPSS), and 1100–1112 (SPQD…SSPP).

It localises to the secreted. The polypeptide is von Willebrand factor A domain-containing protein 5B1 (Vwa5b1) (Mus musculus (Mouse)).